A 370-amino-acid chain; its full sequence is Protein phosphatase 2C homolog 2 (370 aa).

The PPM-type phosphatase domain maps to 23-291; it reads HFGVSHMQGW…DNMTICIVAF (269 aa). 4 residues coordinate Mn(2+): Asp-63, Gly-64, Asp-233, and Asp-282. Phosphoserine occurs at positions 355 and 357.

The protein belongs to the PP2C family. Monomer. The cofactor is Mg(2+). Requires Mn(2+) as cofactor.

It localises to the nucleus. It is found in the cytoplasm. The protein resides in the cytosol. The enzyme catalyses O-phospho-L-seryl-[protein] + H2O = L-seryl-[protein] + phosphate. It carries out the reaction O-phospho-L-threonyl-[protein] + H2O = L-threonyl-[protein] + phosphate. Its activity is regulated as follows. Activity is reduced when phosphosrylated at Ser-355/Ser-357. Its function is as follows. Dephosphorylating regulator for many key proteins. Has an important role in osmotic stability and cell shape control. It may negatively regulate the osmosensing signal transmitted through wis1 map kinase. This is Protein phosphatase 2C homolog 2 (ptc2) from Schizosaccharomyces pombe (strain 972 / ATCC 24843) (Fission yeast).